Reading from the N-terminus, the 368-residue chain is Putative glutamate--cysteine ligase 2 (368 aa).

The protein belongs to the glutamate--cysteine ligase type 2 family. YbdK subfamily.

The enzyme catalyses L-cysteine + L-glutamate + ATP = gamma-L-glutamyl-L-cysteine + ADP + phosphate + H(+). In terms of biological role, ATP-dependent carboxylate-amine ligase which exhibits weak glutamate--cysteine ligase activity. The chain is Putative glutamate--cysteine ligase 2 from Pseudomonas putida (strain ATCC 47054 / DSM 6125 / CFBP 8728 / NCIMB 11950 / KT2440).